Reading from the N-terminus, the 407-residue chain is MTLWTARAAHRAWLDAEARRLVDFAAAADHPEHGFAWLDGSGAPLPEQGVHTWITCRVTHVAALAHLEGIPGASALADHGLRALAGPLRDPEHDGWFTALDSRGTVADSRKEAYQHAFVLLAAASATVAGRPGARELLDAAAAVIEQRFWEEETGRCRESWDAAWHADEPYRGANSNMHLVEAFLAAFDATGDRVWAERALRIAHFFVHEVAAPRDWRLPEHFTPDWQVVADYNTDDRAHPFRPYGVTVGHVLEWARLLVHVEAALPDPPSWLLADAEAMFAAAVARGWSVDGTEGFVYTLDYDDTPVVRSRMHWVVAEAISAAAVLGQRTGDERYEHWYRTWWDHAATYFVDTVQGSWHHELDPTLAPPPGGTWSGKPDVYHAYQATRLPLLPLAPSLAGALATVG.

Active-site proton donor/acceptor residues include His-251 and His-383.

It belongs to the N-acylglucosamine 2-epimerase family. As to quaternary structure, homodimer.

It catalyses the reaction D-mannose = D-fructose. The enzyme catalyses D-lyxose = D-xylulose. Its activity is regulated as follows. Significantly inhibited by divalent metal ions such as Cu(2+), Cd(2+) or Ca(2+). Functionally, catalyzes the reversible isomerization of D-mannose to D-fructose. Shows weaker activity on D-lyxose, but cannot use N-acetyl D-glucosamine. This chain is D-mannose isomerase, found in Thermobifida fusca (Thermomonospora fusca).